We begin with the raw amino-acid sequence, 132 residues long: Small ribosomal subunit protein uS8c (132 aa).

Belongs to the universal ribosomal protein uS8 family. Part of the 30S ribosomal subunit.

It localises to the plastid. The protein localises to the chloroplast. Functionally, one of the primary rRNA binding proteins, it binds directly to 16S rRNA central domain where it helps coordinate assembly of the platform of the 30S subunit. The polypeptide is Small ribosomal subunit protein uS8c (rps8) (Ceratophyllum demersum (Rigid hornwort)).